The sequence spans 90 residues: DNA-binding protein HU (90 aa).

This sequence belongs to the bacterial histone-like protein family. As to quaternary structure, homodimer.

Its function is as follows. Histone-like DNA-binding protein which is capable of wrapping DNA to stabilize it, and thus to prevent its denaturation under extreme environmental conditions. The chain is DNA-binding protein HU (hup) from Haemophilus influenzae (strain ATCC 51907 / DSM 11121 / KW20 / Rd).